Reading from the N-terminus, the 188-residue chain is Adenine phosphoribosyltransferase (188 aa).

It belongs to the purine/pyrimidine phosphoribosyltransferase family. As to quaternary structure, homodimer.

It localises to the cytoplasm. The enzyme catalyses AMP + diphosphate = 5-phospho-alpha-D-ribose 1-diphosphate + adenine. It participates in purine metabolism; AMP biosynthesis via salvage pathway; AMP from adenine: step 1/1. In terms of biological role, catalyzes a salvage reaction resulting in the formation of AMP, that is energically less costly than de novo synthesis. In Paraburkholderia phymatum (strain DSM 17167 / CIP 108236 / LMG 21445 / STM815) (Burkholderia phymatum), this protein is Adenine phosphoribosyltransferase.